Here is a 40-residue protein sequence, read N- to C-terminus: Large ribosomal subunit protein bL36 (40 aa).

Belongs to the bacterial ribosomal protein bL36 family.

This is Large ribosomal subunit protein bL36 from Corynebacterium aurimucosum (strain ATCC 700975 / DSM 44827 / CIP 107346 / CN-1) (Corynebacterium nigricans).